Consider the following 102-residue polypeptide: Protein iss (102 aa).

Functionally, increases serum survival and confers group II surface exclusion. In Escherichia coli, this protein is Protein iss (iss).